Reading from the N-terminus, the 296-residue chain is Partitioning protein REP2 (296 aa).

At M1 the chain carries N-acetylmethionine. An interaction with REP1 region spans residues 1 to 57; the sequence is MDDIETAKNLTVKARTAYSVWDVCRLFIEMIAPDVDIDIESKRKSDELLFPGYVIRP. The DNA-binding, and self-association stretch occupies residues 58 to 296; it reads MESLTTGRPY…GRKSRNTSRV (239 aa). The segment at 228-296 is disordered; that stretch reads SELEGRTEVN…GRKSRNTSRV (69 aa). A compositionally biased stretch (basic residues) spans 275–296; the sequence is PTKKRRVATRVRGRKSRNTSRV. Positions 276–296 are nuclear localization; sequence TKKRRVATRVRGRKSRNTSRV.

Interacts with REP1.

It is found in the nucleus. Part of the plasmid partitioning system, which ensures the equal distribution of replicated plasmid molecules to daughter cells. The plasmids exist as well-organized plasmid foci within the nucleus that stay together throughout the cell-cycle and act as entity during segregation, effetively reducing copy number to one. Plasmid partitioning requires the proteins REP1, REP2, and a cis-acting locus STB (REP3). REP1-REP2 stably associate with CSE4-containing chromatin at STB during S-phase, marking the locus with a centromeric tag, and thereby probably catching mitotic spindle microtubules to the plasmid cluster and coupling plasmid segregation to chromosome segregation. REP1-REP2 are required to recruit the cohesin complex to the STB locus for pairing of the replicated plasmid cluster, a prerequisite for successful plasmid segregation. REP1-REP2 also negatively regulate expression of site-specific recombinase FLP and of RAF1. The chain is Partitioning protein REP2 (REP2) from Saccharomyces cerevisiae (strain ATCC 204508 / S288c) (Baker's yeast).